The chain runs to 236 residues: UPF0173 metal-dependent hydrolase AZC_2841 (236 aa).

It belongs to the UPF0173 family.

The polypeptide is UPF0173 metal-dependent hydrolase AZC_2841 (Azorhizobium caulinodans (strain ATCC 43989 / DSM 5975 / JCM 20966 / LMG 6465 / NBRC 14845 / NCIMB 13405 / ORS 571)).